A 241-amino-acid polypeptide reads, in one-letter code: 15,16-dihydrobiliverdin:ferredoxin oxidoreductase (241 aa).

It belongs to the HY2 family.

It catalyses the reaction 15,16-dihydrobiliverdin + oxidized 2[4Fe-4S]-[ferredoxin] = biliverdin IXalpha + reduced 2[4Fe-4S]-[ferredoxin] + 2 H(+). Catalyzes the two-electron reduction of biliverdin IX-alpha at the C15 methine bridge. The polypeptide is 15,16-dihydrobiliverdin:ferredoxin oxidoreductase (pebA) (Prochlorococcus marinus (strain SARG / CCMP1375 / SS120)).